We begin with the raw amino-acid sequence, 173 residues long: uncharacterized protein (173 aa).

A disordered region spans residues 49 to 72; the sequence is PTRSGRTSNSGNRGPVMTSTSSIN.

This is an uncharacterized protein from Human adenovirus B serotype 7 (HAdV-7).